Consider the following 455-residue polypeptide: Beta-cyclopiazonate dehydrogenase (455 aa).

Residues 1-25 (MAVRIARFLGLSTVAYLALANGIDA) form the signal peptide.

It belongs to the beta-cyclopiazonate dehydrogenase family. Requires FAD as cofactor.

The catalysed reaction is beta-cyclopiazonate + A = alpha-cyclopiazonate + AH2. Beta-cyclopiazonate dehydrogenase involved in the synthesis of the fungal neurotoxin alpha-cyclopiazonic acid (CPA). CpaO carries out the dehydrogenation of beta-CPA to yield an unstable enimine product, which is captured by intramolecular cyclization to create the pentacyclic fused scaffold of alpha-cyclopiazonate. This chain is Beta-cyclopiazonate dehydrogenase, found in Aspergillus oryzae (strain ATCC 42149 / RIB 40) (Yellow koji mold).